A 151-amino-acid chain; its full sequence is Ubiquitin-conjugating enzyme E2 W (151 aa).

A Peptide (Met-Gly) (interchain with G-Cter in ubiquitin) cross-link involves residue M1. One can recognise a UBC core domain in the interval 3–151; that stretch reads SMQKRLQKEL…TKWWYHDDTC (149 aa). Residue C91 is the Glycyl thioester intermediate of the active site.

This sequence belongs to the ubiquitin-conjugating enzyme family. As to quaternary structure, homodimer. Interacts with FANCL. Interacts with STUB1/CHIP. Ubiquitinated in vitro in the presence of FANCL. Autoubiquitinated at Met-1.

The protein resides in the nucleus. The catalysed reaction is S-ubiquitinyl-[E1 ubiquitin-activating enzyme]-L-cysteine + [E2 ubiquitin-conjugating enzyme]-L-cysteine = [E1 ubiquitin-activating enzyme]-L-cysteine + S-ubiquitinyl-[E2 ubiquitin-conjugating enzyme]-L-cysteine.. The enzyme catalyses S-ubiquitinyl-[E1 ubiquitin-activating enzyme]-L-cysteine + [acceptor protein]-N-terminal-amino acid = [E1 ubiquitin-activating enzyme]-L-cysteine + N-terminal-ubiquitinyl-[acceptor protein].. The protein operates within protein modification; protein ubiquitination. Accepts ubiquitin from the E1 complex and catalyzes its covalent attachment to other proteins. Specifically monoubiquitinates the N-terminus of various substrates, including ATXN3, MAPT/TAU, POLR2H/RPB8 and STUB1/CHIP, by recognizing backbone atoms of disordered N-termini. Involved in degradation of misfolded chaperone substrates by mediating monoubiquitination of STUB1/CHIP, leading to recruitment of ATXN3 to monoubiquitinated STUB1/CHIP, and restriction of the length of ubiquitin chain attached to STUB1/CHIP substrates by ATXN3. After UV irradiation, but not after mitomycin-C (MMC) treatment, acts as a specific E2 ubiquitin-conjugating enzyme for the Fanconi anemia complex by associating with E3 ubiquitin-protein ligase FANCL and catalyzing monoubiquitination of FANCD2, a key step in the DNA damage pathway. In vitro catalyzes 'Lys-11'-linked polyubiquitination. UBE2W-catalyzed ubiquitination also occurs in the presence of inactive RING/U-box type E3s, i.e. lacking the active site cysteine residues to form thioester bonds with ubiquitin, or even in the absence of E3, albeit at a slower rate. This is Ubiquitin-conjugating enzyme E2 W (UBE2W) from Bos taurus (Bovine).